Consider the following 405-residue polypeptide: L-rhamnonate dehydratase (405 aa).

The substrate site is built by histidine 33 and arginine 59. Residues aspartate 226, glutamate 252, and glutamate 280 each coordinate Mg(2+). The active-site Proton acceptor is histidine 329. Position 349 (glutamate 349) interacts with substrate.

Belongs to the mandelate racemase/muconate lactonizing enzyme family. RhamD subfamily. In terms of assembly, homooctamer; tetramer of dimers. Mg(2+) is required as a cofactor.

The catalysed reaction is L-rhamnonate = 2-dehydro-3-deoxy-L-rhamnonate + H2O. Functionally, catalyzes the dehydration of L-rhamnonate to 2-keto-3-deoxy-L-rhamnonate (KDR). The sequence is that of L-rhamnonate dehydratase from Escherichia coli (strain K12 / DH10B).